The chain runs to 279 residues: Large ribosomal subunit protein mL46 (279 aa).

Position 230 is an N6-acetyllysine (lysine 230).

The protein belongs to the mitochondrion-specific ribosomal protein mL46 family. In terms of assembly, component of the mitochondrial ribosome large subunit (39S) which comprises a 16S rRNA and about 50 distinct proteins.

It localises to the mitochondrion. The sequence is that of Large ribosomal subunit protein mL46 (MRPL46) from Pongo abelii (Sumatran orangutan).